The sequence spans 409 residues: Protein ROOT PRIMORDIUM DEFECTIVE 1 (409 aa).

Positions 47-386 constitute a PORR domain; it reads VRDHGYDNYM…RLAELVLMSP (340 aa).

Expressed in roots, hypocotyls, cotyledons and shoot apex.

Its function is as follows. Involved in pre-arranging the maintenance of the active cell proliferation during root primordium development. Does not seem to be involved in cell cycle progression. The chain is Protein ROOT PRIMORDIUM DEFECTIVE 1 (RPD1) from Arabidopsis thaliana (Mouse-ear cress).